The primary structure comprises 1383 residues: NPC intracellular cholesterol transporter 1 homolog 1 (1383 aa).

The first 20 residues, 1–20 (MKQLLIFCLLFGSIFHHGDA), serve as a signal peptide directing secretion. Intrachain disulfides connect Cys22/Cys76, Cys28/Cys39, Cys65/Cys111, Cys77/Cys115, Cys99/Cys246, Cys102/Cys167, Cys182/Cys187, and Cys235/Cys251. Asn42 carries an N-linked (GlcNAc...) asparagine glycan. N-linked (GlcNAc...) asparagine glycosylation occurs at Asn231. The next 2 membrane-spanning stretches (helical) occupy residues 282–302 (IFVM…GFVF) and 353–373 (PKSH…GMIY). The N-linked (GlcNAc...) asparagine glycan is linked to Asn447. 2 disulfides stabilise this stretch: Cys464/Cys474 and Cys526/Cys541. The N-linked (GlcNAc...) asparagine glycan is linked to Asn558. Transmembrane regions (helical) follow at residues 627 to 647 (EIVT…FSLG), 665 to 685 (ICLG…SWGI), 697 to 717 (ALVV…FMVV), 746 to 766 (TMPA…IGGF), 780 to 800 (GLAV…LFVW), and 856 to 876 (IITG…SSKI). An SSD domain is found at 627–800 (EIVTVVIALA…CTIFLALFVW (174 aa)). 4 disulfide bridges follow: Cys929–Cys934, Cys976–Cys1046, Cys977–Cys1005, and Cys988–Cys1002. Residues Asn993 and Asn1082 are each glycosylated (N-linked (GlcNAc...) asparagine). The next 5 helical transmembrane spans lie at 1126–1146 (IMPI…GIIC), 1157–1177 (ACAV…MYIF), 1179–1199 (IPVN…LIEF), 1226–1246 (IGPI…MFLS), and 1260–1280 (LFLI…PILL).

It belongs to the patched family.

Its subcellular location is the membrane. The catalysed reaction is cholesterol(in) = cholesterol(out). Functionally, involved in the uptake or utilization of cholesterol. Ncr-1 and ncr-2 act redundantly to prevent dauer larva formation under favorable growth conditions, and are required for the normal functioning of ADF, ASI and ASG neurons. This is NPC intracellular cholesterol transporter 1 homolog 1 from Caenorhabditis elegans.